A 329-amino-acid chain; its full sequence is Methionyl-tRNA formyltransferase (329 aa).

Position 117–120 (117–120) interacts with (6S)-5,6,7,8-tetrahydrofolate; the sequence is SLLP.

It belongs to the Fmt family.

The catalysed reaction is L-methionyl-tRNA(fMet) + (6R)-10-formyltetrahydrofolate = N-formyl-L-methionyl-tRNA(fMet) + (6S)-5,6,7,8-tetrahydrofolate + H(+). Its function is as follows. Attaches a formyl group to the free amino group of methionyl-tRNA(fMet). The formyl group appears to play a dual role in the initiator identity of N-formylmethionyl-tRNA by promoting its recognition by IF2 and preventing the misappropriation of this tRNA by the elongation apparatus. The sequence is that of Methionyl-tRNA formyltransferase from Paracidovorax citrulli (strain AAC00-1) (Acidovorax citrulli).